Consider the following 446-residue polypeptide: Maltoporin (446 aa).

A signal peptide spans 1-25; sequence MMITLRKLPLAVAVAAGVMSAQAMA.

This sequence belongs to the porin LamB (TC 1.B.3) family. Homotrimer formed of three 18-stranded antiparallel beta-barrels, containing three independent channels.

It is found in the cell outer membrane. It catalyses the reaction beta-maltose(in) = beta-maltose(out). Involved in the transport of maltose and maltodextrins. The protein is Maltoporin of Escherichia coli (strain SE11).